The following is a 193-amino-acid chain: Orotate phosphoribosyltransferase (193 aa).

Residue 114–122 (EDVITTGGS) coordinates 5-phospho-alpha-D-ribose 1-diphosphate. 2 residues coordinate orotate: threonine 118 and arginine 146.

It belongs to the purine/pyrimidine phosphoribosyltransferase family. PyrE subfamily. Homodimer. The cofactor is Mg(2+).

The catalysed reaction is orotidine 5'-phosphate + diphosphate = orotate + 5-phospho-alpha-D-ribose 1-diphosphate. Its pathway is pyrimidine metabolism; UMP biosynthesis via de novo pathway; UMP from orotate: step 1/2. Catalyzes the transfer of a ribosyl phosphate group from 5-phosphoribose 1-diphosphate to orotate, leading to the formation of orotidine monophosphate (OMP). This chain is Orotate phosphoribosyltransferase, found in Chlorobium phaeobacteroides (strain DSM 266 / SMG 266 / 2430).